The chain runs to 590 residues: Probable serine/threonine-protein phosphatase PP2A regulatory subunit (590 aa).

14 HEAT repeats span residues 37–73 (LSTIALALGVERTRNELIQFLTDTIYDEDEVLLVLAE), 74–111 (QLGNFTPLVGGPDHVHCLLLPLENLATVEETVVRDKAV), 113–150 (SLRKIADKHSSASLEEHFVPMLRRLATGDWFTSRTSAC), 151–188 (GLFSVVYPRVSPAIKSELKSMFRTLCRDDTPMVRRAAA), 189–227 (AKLGEFAKVFEKTAVIEGLHSSLTDLHVDEQDSVRLLTV), 228–266 (ESAIAFGTLLDKANKKKLIEPILIELFDDKSWRVRYMVA), 267–305 (EKLIEIQNVLGEDMDTTHLVNMYTNLLKDPEGEVRCAAT), 306–344 (QRLQEFALNLPEDKRQNIICNSLLNVAKELVTDGNQLVK), 349–387 (GVIMGLAPLIGKEQTVSELLPIYMQLLNDQTPEVRLNII), 388–426 (SSLDKVNEVIGAAQLSTSLLPAIVGLAEDGKWRVRLAIV), 427–465 (QFMPLLASQLGQEFFDEKLLPLCLNWLTDHVFSIREAST), 466–504 (LIMKELTQKFGGQWASTNIVPKMQKLQKDTNYLQRMTCL), 505–543 (FCLNTLSEAMTQEQILKEIMPIVKDLVEDDVPNVRFNAA), and 544–582 (KSLKRIGKNLTPSTLTSEVKPLLEKLGKDSDFDVRYFSE).

It belongs to the phosphatase 2A regulatory subunit A family. As to quaternary structure, part of a complex consisting of a common heterodimeric core enzyme, composed of catalytic subunit let-92 and constant regulatory subunit paa-1, that associates with a variety of regulatory subunits which confer distinct properties to the holoenzyme. Interacts with rsa-1.

The protein resides in the cytoplasm. It localises to the cytoskeleton. It is found in the microtubule organizing center. The protein localises to the centrosome. Its subcellular location is the spindle. In terms of biological role, acts as a scaffolding protein for phosphatase let-92 and its regulatory subunits. Probably together with let-92 and regulatory subunit sur-6, regulates centriole duplication, microtubule outgrowth and mitotic spindle stability during early embryonic cell division by preventing the degradation of sas-5 and kinase zyg-1. During vulva development, may play a role with phosphatase let-92 and regulatory subunit sur-6 in the induction of vulva cell precursors by positively regulating let-60/Ras-MAP kinase signaling, probably by promoting lin-45 activation. Plays a positive role in axon guidance probably by inhibiting phosphatase let-92. This Caenorhabditis elegans protein is Probable serine/threonine-protein phosphatase PP2A regulatory subunit (paa-1).